We begin with the raw amino-acid sequence, 494 residues long: UDP-glucose 6-dehydrogenase (494 aa).

Residues 11 to 16, Asp36, Arg41, 89 to 93, and 130 to 132 each bind NAD(+); these read GAGYVG, VNTPT, and STV. A disordered region spans residues 88-110; sequence SVNTPTKTYGMGKGRAADLKYIE. The segment at 129-135 is allosteric switch region; it reads KSTVPVR. Glu161 functions as the Proton donor/acceptor in the catalytic mechanism. Residues 161–165, 220–224, Arg260, and 267–273 contribute to the substrate site; these read EFLAE, KLAAN, and KASVGFG. Glu165 serves as a coordination point for NAD(+). The active-site Proton donor/acceptor is Lys220. Cys276 functions as the Nucleophile in the catalytic mechanism. Residue 276–279 participates in NAD(+) binding; sequence CFQK. The interval 321 to 325 is important for formation of active hexamer structure; sequence SLFNT. Residue 338-339 participates in substrate binding; sequence FK. Arg346 contributes to the NAD(+) binding site. Arg442 is a binding site for substrate. The tract at residues 466–494 is disordered; sequence VSAKRIPFASSCEIPKFSLQDPPVKKPRV.

It belongs to the UDP-glucose/GDP-mannose dehydrogenase family. Homohexamer.

It catalyses the reaction UDP-alpha-D-glucose + 2 NAD(+) + H2O = UDP-alpha-D-glucuronate + 2 NADH + 3 H(+). It functions in the pathway nucleotide-sugar biosynthesis; UDP-alpha-D-glucuronate biosynthesis; UDP-alpha-D-glucuronate from UDP-alpha-D-glucose: step 1/1. With respect to regulation, UDP-alpha-D-xylose (UDX) acts as a feedback inhibitor. It binds at the same site as the substrate, but functions as allosteric inhibitor by triggering a conformation change that disrupts the active hexameric ring structure and gives rise to an inactive, horseshoe-shaped hexamer. Catalyzes the formation of UDP-alpha-D-glucuronate, a constituent of complex glycosaminoglycans. Required for the biosynthesis of chondroitin sulfate and heparan sulfate. Required for embryonic development via its role in the biosynthesis of glycosaminoglycans. This chain is UDP-glucose 6-dehydrogenase (UGDH), found in Gallus gallus (Chicken).